The following is a 427-amino-acid chain: Glutamate-1-semialdehyde 2,1-aminomutase (427 aa).

An N6-(pyridoxal phosphate)lysine modification is found at Lys264.

It belongs to the class-III pyridoxal-phosphate-dependent aminotransferase family. HemL subfamily. Homodimer. It depends on pyridoxal 5'-phosphate as a cofactor.

It localises to the cytoplasm. It catalyses the reaction (S)-4-amino-5-oxopentanoate = 5-aminolevulinate. It functions in the pathway porphyrin-containing compound metabolism; protoporphyrin-IX biosynthesis; 5-aminolevulinate from L-glutamyl-tRNA(Glu): step 2/2. The polypeptide is Glutamate-1-semialdehyde 2,1-aminomutase (Clostridium botulinum (strain Eklund 17B / Type B)).